Reading from the N-terminus, the 497-residue chain is Probable cytosol aminopeptidase (497 aa).

Mn(2+)-binding residues include Lys-263 and Asp-268. The active site involves Lys-275. Mn(2+) is bound by residues Asp-286, Asp-345, and Glu-347. Residue Arg-349 is part of the active site.

The protein belongs to the peptidase M17 family. Requires Mn(2+) as cofactor.

The protein localises to the cytoplasm. It carries out the reaction Release of an N-terminal amino acid, Xaa-|-Yaa-, in which Xaa is preferably Leu, but may be other amino acids including Pro although not Arg or Lys, and Yaa may be Pro. Amino acid amides and methyl esters are also readily hydrolyzed, but rates on arylamides are exceedingly low.. It catalyses the reaction Release of an N-terminal amino acid, preferentially leucine, but not glutamic or aspartic acids.. Its function is as follows. Presumably involved in the processing and regular turnover of intracellular proteins. Catalyzes the removal of unsubstituted N-terminal amino acids from various peptides. In Methylorubrum populi (strain ATCC BAA-705 / NCIMB 13946 / BJ001) (Methylobacterium populi), this protein is Probable cytosol aminopeptidase.